Consider the following 205-residue polypeptide: GTP cyclohydrolase-2 (205 aa).

49–53 (RIHSE) contributes to the GTP binding site. The Zn(2+) site is built by Cys54, Cys65, and Cys67. GTP is bound by residues Gln70, 92 to 94 (EGR), and Thr114. Residue Asp126 is the Proton acceptor of the active site. The active-site Nucleophile is Arg128. Residues Thr149 and Lys154 each contribute to the GTP site.

The protein belongs to the GTP cyclohydrolase II family. Requires Zn(2+) as cofactor.

The enzyme catalyses GTP + 4 H2O = 2,5-diamino-6-hydroxy-4-(5-phosphoribosylamino)-pyrimidine + formate + 2 phosphate + 3 H(+). The protein operates within cofactor biosynthesis; riboflavin biosynthesis; 5-amino-6-(D-ribitylamino)uracil from GTP: step 1/4. Its function is as follows. Catalyzes the conversion of GTP to 2,5-diamino-6-ribosylamino-4(3H)-pyrimidinone 5'-phosphate (DARP), formate and pyrophosphate. This is GTP cyclohydrolase-2 from Shewanella piezotolerans (strain WP3 / JCM 13877).